The following is a 97-amino-acid chain: Type VII secretion system extracellular protein A (97 aa).

Residues K61–N93 adopt a coiled-coil conformation.

Belongs to the WXG100 family. sagEsxA-like subfamily. In terms of assembly, forms both homodimers and heterodimers with EsxC.

The protein resides in the secreted. Its function is as follows. Virulence factor that is important for the establishment of infection in the host. EsxA is required for EsxB synthesis as well as secretion. Modulates host cell apoptotic pathways and mediates together with EsxB the release of S.aureus from the host cell. By acting on apoptosis, plays a role in the modulation of dendritic cell-mediated immunity. This chain is Type VII secretion system extracellular protein A, found in Staphylococcus aureus (strain USA300).